The sequence spans 497 residues: Glycerol kinase (497 aa).

Residue Thr-12 coordinates ADP. ATP is bound by residues Thr-12, Thr-13, and Ser-14. Residue Thr-12 coordinates sn-glycerol 3-phosphate. Arg-16 is a binding site for ADP. Sn-glycerol 3-phosphate-binding residues include Arg-82, Glu-83, Tyr-134, and Asp-243. 5 residues coordinate glycerol: Arg-82, Glu-83, Tyr-134, Asp-243, and Gln-244. Positions 265 and 308 each coordinate ADP. ATP is bound by residues Thr-265, Gly-308, Gln-312, and Gly-411. Gly-411 is an ADP binding site.

This sequence belongs to the FGGY kinase family.

It carries out the reaction glycerol + ATP = sn-glycerol 3-phosphate + ADP + H(+). It participates in polyol metabolism; glycerol degradation via glycerol kinase pathway; sn-glycerol 3-phosphate from glycerol: step 1/1. With respect to regulation, inhibited by fructose 1,6-bisphosphate (FBP). Its function is as follows. Key enzyme in the regulation of glycerol uptake and metabolism. Catalyzes the phosphorylation of glycerol to yield sn-glycerol 3-phosphate. This Xanthobacter autotrophicus (strain ATCC BAA-1158 / Py2) protein is Glycerol kinase.